The chain runs to 170 residues: RxLR effector protein CRE16 (170 aa).

Positions 1–23 are cleaved as a signal peptide; it reads MSKLFYAFAVLAVHVLTSSPTTA. Residues 47 to 68 carry the RxLR-dEER motif; that stretch reads RFLRSIHEGEDSLKPSAFSEER.

This sequence belongs to the RxLR effector family.

Its subcellular location is the secreted. It is found in the host cytoplasm. The protein localises to the host nucleus. In terms of biological role, effector that is involved in host plant infection. Contributes to virulence during the early infection stage, by inhibiting plant defense responses induced by both PAMP-triggered immunity (PTI) and effector-triggered immunity (ETI). In Phytophthora infestans (strain T30-4) (Potato late blight agent), this protein is RxLR effector protein CRE16.